The primary structure comprises 431 residues: Dihydroorotase (431 aa).

Zn(2+)-binding residues include histidine 59 and histidine 61. Substrate contacts are provided by residues 61-63 and asparagine 93; that span reads HLR. Positions 151, 178, 231, and 304 each coordinate Zn(2+). The active site involves aspartate 304. Residues histidine 308 and 322-323 contribute to the substrate site; that span reads FG.

The protein belongs to the metallo-dependent hydrolases superfamily. DHOase family. Class I DHOase subfamily. Zn(2+) serves as cofactor.

The enzyme catalyses (S)-dihydroorotate + H2O = N-carbamoyl-L-aspartate + H(+). It functions in the pathway pyrimidine metabolism; UMP biosynthesis via de novo pathway; (S)-dihydroorotate from bicarbonate: step 3/3. Functionally, catalyzes the reversible cyclization of carbamoyl aspartate to dihydroorotate. This Caldanaerobacter subterraneus subsp. tengcongensis (strain DSM 15242 / JCM 11007 / NBRC 100824 / MB4) (Thermoanaerobacter tengcongensis) protein is Dihydroorotase.